Reading from the N-terminus, the 311-residue chain is Malate dehydrogenase (311 aa).

Residues 7 to 13 and aspartate 34 each bind NAD(+); that span reads GAAGGIG. Substrate contacts are provided by arginine 81 and arginine 87. NAD(+) is bound by residues asparagine 94 and 117 to 119; that span reads ITN. Substrate is bound by residues asparagine 119 and arginine 153. The active-site Proton acceptor is histidine 177. Methionine 227 contacts NAD(+).

Belongs to the LDH/MDH superfamily. MDH type 1 family. In terms of assembly, homodimer.

It catalyses the reaction (S)-malate + NAD(+) = oxaloacetate + NADH + H(+). In terms of biological role, catalyzes the reversible oxidation of malate to oxaloacetate. The protein is Malate dehydrogenase of Haemophilus influenzae (strain PittGG).